We begin with the raw amino-acid sequence, 232 residues long: Large ribosomal subunit protein uL1 (232 aa).

Belongs to the universal ribosomal protein uL1 family. As to quaternary structure, part of the 50S ribosomal subunit.

Its function is as follows. Binds directly to 23S rRNA. The L1 stalk is quite mobile in the ribosome, and is involved in E site tRNA release. Functionally, protein L1 is also a translational repressor protein, it controls the translation of the L11 operon by binding to its mRNA. The sequence is that of Large ribosomal subunit protein uL1 from Chlamydia trachomatis serovar L2b (strain UCH-1/proctitis).